A 1401-amino-acid polypeptide reads, in one-letter code: Protein dispatched homolog 2 (1401 aa).

Disordered regions lie at residues 1-91 (MDGD…LAPA) and 113-138 (DRAA…GTWK). A helical membrane pass occupies residues 170–190 (VAVLMLCLAVIFLCTLAGLLG). An N-linked (GlcNAc...) asparagine glycan is attached at N239. A disordered region spans residues 241-264 (SSSHNTLRPAPRGSAQESAVRPRR). N349 and N465 each carry an N-linked (GlcNAc...) asparagine glycan. Residues 471–643 (GMDLGLKQEL…LVWLPASAVL (173 aa)) form the SSD domain. A run of 11 helical transmembrane segments spans residues 484 to 504 (FLVQ…FGMA), 510 to 530 (LFLT…AFFL), 542 to 562 (FVNL…TLIF), 589 to 609 (FGYL…ASYL), 617 to 637 (CLAL…LVWL), 704 to 724 (YIWI…AGVS), 964 to 984 (PAVV…LGTW), 990 to 1010 (LFSV…LVLL), 1019 to 1039 (ALFL…YCIS), 1064 to 1084 (AVGA…TVLL), and 1088 to 1108 (LGII…FFFQ). Disordered regions lie at residues 1169 to 1192 (ARRR…PSVL), 1229 to 1337 (PALQ…NGKR), and 1352 to 1401 (SLPA…GYSS). Residues 1175 to 1184 (SFDTSTATSK) are compositionally biased toward polar residues. Residues 1259–1270 (PLPASPEAPAHS) are compositionally biased toward low complexity. A compositionally biased stretch (polar residues) spans 1284 to 1305 (SSASTLEGLSVSDETCLSTSEP). Residues 1352 to 1362 (SLPASHHSSLS) are compositionally biased toward low complexity. R1366 is modified (omega-N-methylarginine).

This sequence belongs to the dispatched family.

Its subcellular location is the membrane. The chain is Protein dispatched homolog 2 from Homo sapiens (Human).